We begin with the raw amino-acid sequence, 776 residues long: GATOR2 complex protein Wdr24 (776 aa).

WD repeat units follow at residues 63-103, 109-149, 152-192, 196-235, 238-280, and 284-326; these read NLSY…RQKQ, EHER…SINT, CNSE…KCMV, AHYG…GLEH, HTIA…IPFA, and EHTN…ALKA. The disordered stretch occupies residues 466–490; that stretch reads HRSSFSNQKNPMNSRRATQVASDWP. Residues 469–490 are compositionally biased toward polar residues; the sequence is SFSNQKNPMNSRRATQVASDWP. The C4-type zinc-finger motif lies at 703 to 726; the sequence is NCGECGRPMGGKVGWYCDKCKSMQ. The Zn(2+) site is built by Cys-704, Cys-707, Cys-719, Cys-722, Cys-730, Cys-733, Cys-744, Cys-747, His-749, His-752, His-755, Cys-766, Cys-769, His-771, and Cys-773. The RING-type; atypical zinc-finger motif lies at 728–776; it reads AKCCVCGLIVRGVYAWCQGCSHGGHIEHLQKYFAKHSKCPKCGHLCAYS.

The protein belongs to the WD repeat WDR24 family. As to quaternary structure, component of the GATOR complex consisting of mio, Nup44A/Seh1, Im11, Nplr3, Nplr2, Wdr24, Wdr59 and Sec13. Within the GATOR complex, probable component of the GATOR2 subcomplex which is likely composed of mio, Nup44A/Seh1, Wdr24, Wdr59 and Sec13. Interacts with Nup44A/Seh1. Interacts with mio. Interacts with Nplr3. The GATOR2 complex associates with unmet in the absence of S-adenosyl-L-methionine; the mio-Wdr24-Nup44A subcomplex is essential and sufficient for this interaction while Wdr59 and Sec13 are dispensable. This association acts as a nutrient sensor to inhibit mTORC1 signaling in the absence of methionine.

It localises to the lysosome. The protein resides in the cytoplasmic vesicle. It is found in the autophagosome. The enzyme catalyses S-ubiquitinyl-[E2 ubiquitin-conjugating enzyme]-L-cysteine + [acceptor protein]-L-lysine = [E2 ubiquitin-conjugating enzyme]-L-cysteine + N(6)-ubiquitinyl-[acceptor protein]-L-lysine.. Its pathway is protein modification; protein ubiquitination. In terms of biological role, an essential component of the GATOR subcomplex GATOR2 which functions as an activator of the amino acid-sensing branch of the mTORC1 signaling pathway. The two GATOR subcomplexes, GATOR1 and GATOR2, regulate the mTORC1 pathway in order to mediate metabolic homeostasis, female gametogenesis and the response to amino acid limitation and complete starvation. GATOR2 activates the mTORC1 signaling pathway through the inhibition of the GATOR1 subcomplex, controlling the switch to cell proliferation and growth under nutrient replete conditions and during female oocyte development. GATOR2 probably acts as an E3 ubiquitin-protein ligase toward GATOR1. In the presence of abundant amino acids, the GATOR2 complex mediates ubiquitination of components of the GATOR1 complex, leading to GATOR1 inactivation. This GATOR2 component is required for activating mTORC1 and promoting cell growth in both germline and somatic cells. In addition to its role in regulation of the mTORC1 complex, functions independently of mTORC1 to promote the acidification of lysosomes and facilitates autophagic flux. The sequence is that of GATOR2 complex protein Wdr24 from Drosophila melanogaster (Fruit fly).